Here is a 321-residue protein sequence, read N- to C-terminus: Glucokinase (321 aa).

Residue 8–13 coordinates ATP; it reads GDVGGT.

Belongs to the bacterial glucokinase family.

The protein localises to the cytoplasm. The catalysed reaction is D-glucose + ATP = D-glucose 6-phosphate + ADP + H(+). This chain is Glucokinase, found in Salmonella arizonae (strain ATCC BAA-731 / CDC346-86 / RSK2980).